The chain runs to 160 residues: 6,7-dimethyl-8-ribityllumazine synthase (160 aa).

5-amino-6-(D-ribitylamino)uracil-binding positions include W28, 59 to 61 (ALE), and 81 to 83 (CVI). 86–87 (ET) contacts (2S)-2-hydroxy-3-oxobutyl phosphate. H89 functions as the Proton donor in the catalytic mechanism. N114 lines the 5-amino-6-(D-ribitylamino)uracil pocket. R128 is a binding site for (2S)-2-hydroxy-3-oxobutyl phosphate.

The protein belongs to the DMRL synthase family.

It catalyses the reaction (2S)-2-hydroxy-3-oxobutyl phosphate + 5-amino-6-(D-ribitylamino)uracil = 6,7-dimethyl-8-(1-D-ribityl)lumazine + phosphate + 2 H2O + H(+). It functions in the pathway cofactor biosynthesis; riboflavin biosynthesis; riboflavin from 2-hydroxy-3-oxobutyl phosphate and 5-amino-6-(D-ribitylamino)uracil: step 1/2. In terms of biological role, catalyzes the formation of 6,7-dimethyl-8-ribityllumazine by condensation of 5-amino-6-(D-ribitylamino)uracil with 3,4-dihydroxy-2-butanone 4-phosphate. This is the penultimate step in the biosynthesis of riboflavin. This Corynebacterium jeikeium (strain K411) protein is 6,7-dimethyl-8-ribityllumazine synthase.